Here is a 71-residue protein sequence, read N- to C-terminus: Small ribosomal subunit protein bS21 (71 aa).

Belongs to the bacterial ribosomal protein bS21 family.

The polypeptide is Small ribosomal subunit protein bS21 (Alcanivorax borkumensis (strain ATCC 700651 / DSM 11573 / NCIMB 13689 / SK2)).